Here is a 521-residue protein sequence, read N- to C-terminus: Maturase K (521 aa).

Belongs to the intron maturase 2 family. MatK subfamily.

Its subcellular location is the plastid. The protein localises to the chloroplast. In terms of biological role, usually encoded in the trnK tRNA gene intron. Probably assists in splicing its own and other chloroplast group II introns. The protein is Maturase K of Anthericum liliago (St-Bernard's lily).